The following is a 417-amino-acid chain: Serine hydroxymethyltransferase 1 (417 aa).

Residues Leu121 and 125–127 each bind (6S)-5,6,7,8-tetrahydrofolate; that span reads GHL. The residue at position 230 (Lys230) is an N6-(pyridoxal phosphate)lysine. Residue 355–357 coordinates (6S)-5,6,7,8-tetrahydrofolate; the sequence is SPF.

The protein belongs to the SHMT family. As to quaternary structure, homodimer. Requires pyridoxal 5'-phosphate as cofactor.

The protein localises to the cytoplasm. It carries out the reaction (6R)-5,10-methylene-5,6,7,8-tetrahydrofolate + glycine + H2O = (6S)-5,6,7,8-tetrahydrofolate + L-serine. It participates in one-carbon metabolism; tetrahydrofolate interconversion. The protein operates within amino-acid biosynthesis; glycine biosynthesis; glycine from L-serine: step 1/1. Functionally, catalyzes the reversible interconversion of serine and glycine with tetrahydrofolate (THF) serving as the one-carbon carrier. This reaction serves as the major source of one-carbon groups required for the biosynthesis of purines, thymidylate, methionine, and other important biomolecules. Also exhibits THF-independent aldolase activity toward beta-hydroxyamino acids, producing glycine and aldehydes, via a retro-aldol mechanism. In Pseudomonas syringae pv. tomato (strain ATCC BAA-871 / DC3000), this protein is Serine hydroxymethyltransferase 1.